Consider the following 507-residue polypeptide: Probable DNA ligase (507 aa).

Glutamate 209 is an ATP binding site. The active-site N6-AMP-lysine intermediate is the lysine 211. Residues arginine 216, arginine 231, glutamate 260, phenylalanine 300, arginine 372, and lysine 378 each coordinate ATP.

The protein belongs to the ATP-dependent DNA ligase family. It depends on Mg(2+) as a cofactor.

It carries out the reaction ATP + (deoxyribonucleotide)n-3'-hydroxyl + 5'-phospho-(deoxyribonucleotide)m = (deoxyribonucleotide)n+m + AMP + diphosphate.. DNA ligase that seals nicks in double-stranded DNA during DNA replication, DNA recombination and DNA repair. The sequence is that of Probable DNA ligase from Mycobacterium bovis (strain ATCC BAA-935 / AF2122/97).